We begin with the raw amino-acid sequence, 181 residues long: Protein Syd (181 aa).

The protein belongs to the Syd family.

Its subcellular location is the cell inner membrane. Functionally, interacts with the SecY protein in vivo. May bind preferentially to an uncomplexed state of SecY, thus functioning either as a chelating agent for excess SecY in the cell or as a regulatory factor that negatively controls the translocase function. The protein is Protein Syd of Salmonella agona (strain SL483).